The primary structure comprises 284 residues: 2-dehydro-3-deoxyphosphooctonate aldolase (284 aa).

Belongs to the KdsA family.

The protein localises to the cytoplasm. It carries out the reaction D-arabinose 5-phosphate + phosphoenolpyruvate + H2O = 3-deoxy-alpha-D-manno-2-octulosonate-8-phosphate + phosphate. It participates in carbohydrate biosynthesis; 3-deoxy-D-manno-octulosonate biosynthesis; 3-deoxy-D-manno-octulosonate from D-ribulose 5-phosphate: step 2/3. The protein operates within bacterial outer membrane biogenesis; lipopolysaccharide biosynthesis. The protein is 2-dehydro-3-deoxyphosphooctonate aldolase of Escherichia fergusonii (strain ATCC 35469 / DSM 13698 / CCUG 18766 / IAM 14443 / JCM 21226 / LMG 7866 / NBRC 102419 / NCTC 12128 / CDC 0568-73).